The primary structure comprises 141 residues: Transcription antitermination protein NusB (141 aa).

It belongs to the NusB family.

Involved in transcription antitermination. Required for transcription of ribosomal RNA (rRNA) genes. Binds specifically to the boxA antiterminator sequence of the ribosomal RNA (rrn) operons. This chain is Transcription antitermination protein NusB, found in Neisseria gonorrhoeae (strain ATCC 700825 / FA 1090).